The following is a 200-amino-acid chain: Probable GTP-binding protein EngB (200 aa).

An EngB-type G domain is found at 30–199; it reads KKAEVAIAGR…EDYIYENWIK (170 aa). Residues 38 to 45, 64 to 68, 82 to 85, 149 to 152, and 178 to 180 contribute to the GTP site; these read GRSNAGKS, GKTRL, DMPG, TKAD, and VSA. Residues Ser-45 and Thr-66 each contribute to the Mg(2+) site.

Belongs to the TRAFAC class TrmE-Era-EngA-EngB-Septin-like GTPase superfamily. EngB GTPase family. Mg(2+) serves as cofactor.

Its function is as follows. Necessary for normal cell division and for the maintenance of normal septation. In Bdellovibrio bacteriovorus (strain ATCC 15356 / DSM 50701 / NCIMB 9529 / HD100), this protein is Probable GTP-binding protein EngB.